Reading from the N-terminus, the 493-residue chain is Trigger factor (493 aa).

In terms of domain architecture, PPIase FKBP-type spans 169 to 254 (GDRVTMDYLG…VKEVAAPAET (86 aa)). Residues 439–493 (ELLAEDEDGDDTKPAKKSAKKKAAKAEDASAEGEEAAPKKKAAAKKKAADEGDAE) are disordered.

It belongs to the FKBP-type PPIase family. Tig subfamily.

Its subcellular location is the cytoplasm. It carries out the reaction [protein]-peptidylproline (omega=180) = [protein]-peptidylproline (omega=0). Involved in protein export. Acts as a chaperone by maintaining the newly synthesized protein in an open conformation. Functions as a peptidyl-prolyl cis-trans isomerase. The polypeptide is Trigger factor (Allorhizobium ampelinum (strain ATCC BAA-846 / DSM 112012 / S4) (Agrobacterium vitis (strain S4))).